The primary structure comprises 156 residues: MLYKSIDEFVKVIDKKKRIIGLDFGEKKIGIALSDKTNLVAIPYSVYIKRSTRKDLGSLYNIFVENNVGSMVIGWPIELSGIESELCQKVVLLANRIIAKYKINIYLHDERYSTAMATRVAKLANIKRKESQSIDDKIAAMLILQQVLDIMKIYQI.

It belongs to the YqgF nuclease family.

The protein resides in the cytoplasm. Functionally, could be a nuclease involved in processing of the 5'-end of pre-16S rRNA. This is Putative pre-16S rRNA nuclease from Ehrlichia canis (strain Jake).